The sequence spans 151 residues: Large ribosomal subunit protein bL9 (151 aa).

Belongs to the bacterial ribosomal protein bL9 family.

In terms of biological role, binds to the 23S rRNA. This is Large ribosomal subunit protein bL9 from Pseudothermotoga lettingae (strain ATCC BAA-301 / DSM 14385 / NBRC 107922 / TMO) (Thermotoga lettingae).